The following is an 856-amino-acid chain: Translation initiation factor IF-2 (856 aa).

Disordered stretches follow at residues 1–248 (MSDN…ARAR) and 254–273 (KRAR…QQKQ). Positions 22–38 (ETGQVKQSFSHGRSNTV) are enriched in polar residues. A compositionally biased stretch (pro residues) spans 83 to 93 (APRPAPAPIPT). Residues 100 to 150 (LERREQQERLLREAEEARMAALEETRRREERAKAEATEEERRRAEENRRAE) are compositionally biased toward basic and acidic residues. Residues 156–196 (AAAAAAAAATAEAETAAAAPREEAPAAAGTAEEAPRTSSST) show a composition bias toward low complexity. Positions 197–209 (MPPPRRFTPVPSP) are enriched in pro residues. The span at 210 to 229 (KRPEPPRPQQRDRKGDDRRQ) shows a compositional bias: basic and acidic residues. The tr-type G domain occupies 356-526 (PRPPVVTIMG…ELQAELLELK (171 aa)). Residues 365–372 (GHVDHGKT) are G1. Residue 365 to 372 (GHVDHGKT) coordinates GTP. The interval 390–394 (GITQH) is G2. A G3 region spans residues 412-415 (DTPG). GTP-binding positions include 412–416 (DTPGH) and 466–469 (NKMD). The G4 stretch occupies residues 466–469 (NKMD). The interval 502-504 (SAL) is G5.

It belongs to the TRAFAC class translation factor GTPase superfamily. Classic translation factor GTPase family. IF-2 subfamily.

The protein resides in the cytoplasm. Functionally, one of the essential components for the initiation of protein synthesis. Protects formylmethionyl-tRNA from spontaneous hydrolysis and promotes its binding to the 30S ribosomal subunits. Also involved in the hydrolysis of GTP during the formation of the 70S ribosomal complex. This is Translation initiation factor IF-2 from Rhizorhabdus wittichii (strain DSM 6014 / CCUG 31198 / JCM 15750 / NBRC 105917 / EY 4224 / RW1) (Sphingomonas wittichii).